We begin with the raw amino-acid sequence, 163 residues long: Putative H/ACA ribonucleoprotein complex subunit 2-like protein (163 aa).

This sequence belongs to the eukaryotic ribosomal protein eL8 family. In terms of assembly, component of the small nucleolar ribonucleoprotein particle containing H/ACA-type snoRNAs (H/ACA snoRNPs).

The protein resides in the nucleus. The protein localises to the nucleolus. In terms of biological role, required for ribosome biogenesis. Part of a complex which catalyzes pseudouridylation of rRNA. This involves the isomerization of uridine such that the ribose is subsequently attached to C5, instead of the normal N1. Pseudouridine ('psi') residues may serve to stabilize the conformation of rRNAs. In Caenorhabditis briggsae, this protein is Putative H/ACA ribonucleoprotein complex subunit 2-like protein.